A 179-amino-acid polypeptide reads, in one-letter code: O-acetyl-ADP-ribose deacetylase (179 aa).

Residues 1 to 175 (MTSRLQVIQG…LYARLLTQQG (175 aa)) form the Macro domain. Substrate is bound by residues 11-12 (DI), asparagine 25, 33-35 (GVD), and 122-126 (STGVY). Residue aspartate 35 is the Proton acceptor of the active site.

This sequence belongs to the MacroD-type family. YmdB subfamily. In terms of assembly, homodimer. Interacts with RNase III.

The enzyme catalyses 3''-O-acetyl-ADP-D-ribose + H2O = ADP-D-ribose + acetate + H(+). The catalysed reaction is 2''-O-acetyl-ADP-D-ribose + H2O = ADP-D-ribose + acetate + H(+). Functionally, deacetylates O-acetyl-ADP ribose to yield ADP-ribose and free acetate. Down-regulates ribonuclease 3 (RNase III) activity. Acts by interacting directly with the region of the ribonuclease that is required for dimerization/activation. The chain is O-acetyl-ADP-ribose deacetylase from Salmonella typhi.